We begin with the raw amino-acid sequence, 189 residues long: NADH-quinone oxidoreductase subunit B (189 aa).

[4Fe-4S] cluster-binding residues include Cys39, Cys40, Cys104, and Cys135.

Belongs to the complex I 20 kDa subunit family. NDH-1 is composed of 14 different subunits. Subunits NuoB, C, D, E, F, and G constitute the peripheral sector of the complex. It depends on [4Fe-4S] cluster as a cofactor.

Its subcellular location is the cell inner membrane. It carries out the reaction a quinone + NADH + 5 H(+)(in) = a quinol + NAD(+) + 4 H(+)(out). Its function is as follows. NDH-1 shuttles electrons from NADH, via FMN and iron-sulfur (Fe-S) centers, to quinones in the respiratory chain. The immediate electron acceptor for the enzyme in this species is believed to be a menaquinone. Couples the redox reaction to proton translocation (for every two electrons transferred, four hydrogen ions are translocated across the cytoplasmic membrane), and thus conserves the redox energy in a proton gradient. This Chlorobium limicola (strain DSM 245 / NBRC 103803 / 6330) protein is NADH-quinone oxidoreductase subunit B.